We begin with the raw amino-acid sequence, 616 residues long: Zinc metalloproteinase-disintegrin-like ecarin (616 aa).

An N-terminal signal peptide occupies residues 1 to 20; the sequence is MIQILLVIICLAVFPYQGCS. A propeptide spanning residues 21 to 190 is cleaved from the precursor; the sequence is IILGSGNVND…EPIKKTLGLI (170 aa). A Peptidase M12B domain is found at 201-397; sequence KFIELVVVVD…YNPKCILDPP (197 aa). Glu-204 is a binding site for Ca(2+). Residues Asn-219 and Asn-261 are each glycosylated (N-linked (GlcNAc...) asparagine). Asp-288 provides a ligand contact to Ca(2+). N-linked (GlcNAc...) asparagine glycosylation is found at Asn-295 and Asn-326. 3 disulfides stabilise this stretch: Cys-312/Cys-392, Cys-352/Cys-376, and Cys-354/Cys-359. Position 337 (His-337) interacts with Zn(2+). Residue Glu-338 is part of the active site. 2 residues coordinate Zn(2+): His-341 and His-347. Ca(2+)-binding residues include Cys-392, Val-407, Asn-410, Ile-412, Glu-414, Glu-417, and Asp-420. Residues 405 to 491 form the Disintegrin domain; that stretch reads PAVCGNEIWE…ECPRNEFQRN (87 aa). 14 cysteine pairs are disulfide-bonded: Cys-408-Cys-437, Cys-419-Cys-432, Cys-421-Cys-427, Cys-431-Cys-454, Cys-445-Cys-451, Cys-450-Cys-476, Cys-463-Cys-483, Cys-470-Cys-502, Cys-495-Cys-507, Cys-514-Cys-567, Cys-529-Cys-578, Cys-542-Cys-555, Cys-562-Cys-604, and Cys-598-Cys-609. The short motif at 469–471 is the D/ECD-tripeptide element; the sequence is DCD. Asp-471, Val-472, and Asn-486 together coordinate Ca(2+). Residue Asn-497 is glycosylated (N-linked (GlcNAc...) asparagine).

The protein belongs to the venom metalloproteinase (M12B) family. P-III subfamily. P-IIIa sub-subfamily. In terms of assembly, monomer. Zn(2+) is required as a cofactor. Expressed by the venom gland.

The protein localises to the secreted. In terms of biological role, snake venom zinc metalloproteinase that catalyzes the conversion of prothrombin (F2) to alpha-thrombin through formation of a thrombin intermediate, thereby functioning as a procoagulant protein. Has a low Km for prothrombin and a high kcat. Cleaves the 320-Arg-Ile-321 bond in prothrombin and produces meizothrombin which is ultimately converted to alpha-thrombin by autolysis. This chain is Zinc metalloproteinase-disintegrin-like ecarin, found in Echis carinatus (Saw-scaled viper).